A 224-amino-acid polypeptide reads, in one-letter code: 7-cyano-7-deazaguanine synthase (224 aa).

Residue 12 to 22 (LSGGLDSSTVT) participates in ATP binding. 4 residues coordinate Zn(2+): Cys193, Cys201, Cys204, and Cys207.

It belongs to the QueC family. Zn(2+) is required as a cofactor.

The enzyme catalyses 7-carboxy-7-deazaguanine + NH4(+) + ATP = 7-cyano-7-deazaguanine + ADP + phosphate + H2O + H(+). Its pathway is purine metabolism; 7-cyano-7-deazaguanine biosynthesis. Catalyzes the ATP-dependent conversion of 7-carboxy-7-deazaguanine (CDG) to 7-cyano-7-deazaguanine (preQ(0)). The protein is 7-cyano-7-deazaguanine synthase of Prochlorococcus marinus subsp. pastoris (strain CCMP1986 / NIES-2087 / MED4).